Reading from the N-terminus, the 497-residue chain is MSQPSARPSAVIVLAAGQGTRMKSTTPKIMHAIGGRSLVGHALAAAWSLAPEHLVAVVRHERARVAEHIETVAAQLGIDALAIADQDDVPGTGRAVELGLAALPADLEGTVVVTYGDVPLLTPETLARLVADHEADGNAVTVLTATLEDATGYGRIVRDAEGLVERIMEHKDALAHAESTGDDSFVAIREVNSGIYAFDAALLRRTLPAISTDNVQGEKYLTDVLGMARDEGGRVASVGTQDVWEVEGANDRRQLSDLGRRLNERVLRHWMKEGVTVVDPSSTWVDVTVTLSSDVTLKPGTQLHGATSVATGAVVGPDSTLTDTQVGERAVVKRTDATEAVIGADASIGPFTYLRPGTVLGEEGRIGAFYETKKVTIGRGAKLSHLGYAGDAEIGEYTNIGCGNITANYDGVNKHRTVIGAHVRTGSNTVFTAPVTVGDGAYTGAGAVVREDVPAGALALNAVSQRTLEGWVPAKRPGTSSAEAARAAGAEGSGAQG.

The interval 1–252 (MSQPSARPSA…VWEVEGANDR (252 aa)) is pyrophosphorylase. Residues 14–17 (LAAG), Lys28, Gln86, 91–92 (GT), 115–117 (YGD), Gly154, Glu169, Asn192, and Asn250 contribute to the UDP-N-acetyl-alpha-D-glucosamine site. Position 117 (Asp117) interacts with Mg(2+). Asn250 serves as a coordination point for Mg(2+). Residues 253-273 (RQLSDLGRRLNERVLRHWMKE) form a linker region. Positions 274 to 497 (GVTVVDPSST…AGAEGSGAQG (224 aa)) are N-acetyltransferase. UDP-N-acetyl-alpha-D-glucosamine is bound by residues Arg355 and Lys373. The active-site Proton acceptor is His385. Residues Tyr388 and Asn399 each contribute to the UDP-N-acetyl-alpha-D-glucosamine site. Acetyl-CoA contacts are provided by residues 408–409 (NY), Ser427, and Ala445. Residues 473–497 (PAKRPGTSSAEAARAAGAEGSGAQG) form a disordered region. The segment covering 480–490 (SSAEAARAAGA) has biased composition (low complexity).

This sequence in the N-terminal section; belongs to the N-acetylglucosamine-1-phosphate uridyltransferase family. In the C-terminal section; belongs to the transferase hexapeptide repeat family. As to quaternary structure, homotrimer. Mg(2+) serves as cofactor.

The protein localises to the cytoplasm. It carries out the reaction alpha-D-glucosamine 1-phosphate + acetyl-CoA = N-acetyl-alpha-D-glucosamine 1-phosphate + CoA + H(+). The catalysed reaction is N-acetyl-alpha-D-glucosamine 1-phosphate + UTP + H(+) = UDP-N-acetyl-alpha-D-glucosamine + diphosphate. It functions in the pathway nucleotide-sugar biosynthesis; UDP-N-acetyl-alpha-D-glucosamine biosynthesis; N-acetyl-alpha-D-glucosamine 1-phosphate from alpha-D-glucosamine 6-phosphate (route II): step 2/2. Its pathway is nucleotide-sugar biosynthesis; UDP-N-acetyl-alpha-D-glucosamine biosynthesis; UDP-N-acetyl-alpha-D-glucosamine from N-acetyl-alpha-D-glucosamine 1-phosphate: step 1/1. The protein operates within bacterial outer membrane biogenesis; LPS lipid A biosynthesis. In terms of biological role, catalyzes the last two sequential reactions in the de novo biosynthetic pathway for UDP-N-acetylglucosamine (UDP-GlcNAc). The C-terminal domain catalyzes the transfer of acetyl group from acetyl coenzyme A to glucosamine-1-phosphate (GlcN-1-P) to produce N-acetylglucosamine-1-phosphate (GlcNAc-1-P), which is converted into UDP-GlcNAc by the transfer of uridine 5-monophosphate (from uridine 5-triphosphate), a reaction catalyzed by the N-terminal domain. This Micrococcus luteus (strain ATCC 4698 / DSM 20030 / JCM 1464 / CCM 169 / CCUG 5858 / IAM 1056 / NBRC 3333 / NCIMB 9278 / NCTC 2665 / VKM Ac-2230) (Micrococcus lysodeikticus) protein is Bifunctional protein GlmU.